The sequence spans 591 residues: Probable translation initiation factor IF-2 (591 aa).

Residues 7–223 form the tr-type G domain; that stretch reads LRTPIVCVMG…LLGLAQKFLE (217 aa). Residues 16–23 are G1; it reads GHVDHGKT. GTP is bound at residue 16–23; sequence GHVDHGKT. The interval 41-45 is G2; the sequence is AITQH. The interval 78 to 81 is G3; that stretch reads DTPG. GTP-binding positions include 78–82 and 132–135; these read DTPGH and NKID. Residues 132-135 are G4; the sequence is NKID. The tract at residues 200–202 is G5; sequence SAM.

Belongs to the TRAFAC class translation factor GTPase superfamily. Classic translation factor GTPase family. IF-2 subfamily.

In terms of biological role, function in general translation initiation by promoting the binding of the formylmethionine-tRNA to ribosomes. Seems to function along with eIF-2. The sequence is that of Probable translation initiation factor IF-2 from Methanosarcina barkeri (strain Fusaro / DSM 804).